Here is a 494-residue protein sequence, read N- to C-terminus: BTB/POZ domain and ankyrin repeat-containing protein NH5.2 (494 aa).

Residues 25-131 (SDVAFSVEGR…LYSGQASVAA (107 aa)) form the BTB domain. Positions 60 to 95 (NHQPPPPPPPPLNWPTAGGGGGGSGGGGRGGAGGGG) are disordered. Positions 61–72 (HQPPPPPPPPLN) are enriched in pro residues. Over residues 76 to 95 (AGGGGGGSGGGGRGGAGGGG) the composition is skewed to gly residues. Residues 137-151 (LPGCGARGCWHTRCG) form a C2HC NPR-type zinc finger. The Zn(2+) site is built by cysteine 140, cysteine 145, histidine 147, and cysteine 150. ANK repeat units lie at residues 275-303 (NKIR…GLDL), 304-334 (DDAL…DVNS), 339-368 (TGKT…DPNS), and 372-406 (DGVT…KLRL). Disordered stretches follow at residues 421–443 (DDGA…PRSD) and 471–494 (GEGR…NGFA).

It belongs to the plant 'ANKYRIN-BTB/POZ' family. 'NOOT-BOP-COCH-like' (NBCL) subfamily. Homodimer. Interacts with TGAL5, TGAL7, TGAL8 and TGAL9.

Its subcellular location is the nucleus. It is found in the cytoplasm. It functions in the pathway protein modification; protein ubiquitination. Functionally, may act as a substrate-specific adapter of an E3 ubiquitin-protein ligase complex (CUL3-RBX1-BTB) which mediates the ubiquitination and subsequent proteasomal degradation of target proteins. Transcriptional co-regulator involved in the promotion of leaf and floral meristem fate and determinacy. Required for the abscission of senescent organs, probably by regulating the cell wall disorganization in abscission zones (AZs, e.g. pulvini at the base of leaves). This is BTB/POZ domain and ankyrin repeat-containing protein NH5.2 from Oryza sativa subsp. japonica (Rice).